The primary structure comprises 244 residues: Ubiquinone/menaquinone biosynthesis C-methyltransferase UbiE (244 aa).

Residues T70, D91, and 117 to 118 contribute to the S-adenosyl-L-methionine site; that span reads DA.

Belongs to the class I-like SAM-binding methyltransferase superfamily. MenG/UbiE family.

It carries out the reaction a 2-demethylmenaquinol + S-adenosyl-L-methionine = a menaquinol + S-adenosyl-L-homocysteine + H(+). The catalysed reaction is a 2-methoxy-6-(all-trans-polyprenyl)benzene-1,4-diol + S-adenosyl-L-methionine = a 5-methoxy-2-methyl-3-(all-trans-polyprenyl)benzene-1,4-diol + S-adenosyl-L-homocysteine + H(+). The protein operates within quinol/quinone metabolism; menaquinone biosynthesis; menaquinol from 1,4-dihydroxy-2-naphthoate: step 2/2. It functions in the pathway cofactor biosynthesis; ubiquinone biosynthesis. Functionally, methyltransferase required for the conversion of demethylmenaquinol (DMKH2) to menaquinol (MKH2) and the conversion of 2-polyprenyl-6-methoxy-1,4-benzoquinol (DDMQH2) to 2-polyprenyl-3-methyl-6-methoxy-1,4-benzoquinol (DMQH2). This Laribacter hongkongensis (strain HLHK9) protein is Ubiquinone/menaquinone biosynthesis C-methyltransferase UbiE.